We begin with the raw amino-acid sequence, 147 residues long: Large ribosomal subunit protein bL9 (147 aa).

It belongs to the bacterial ribosomal protein bL9 family.

In terms of biological role, binds to the 23S rRNA. This Campylobacter jejuni subsp. jejuni serotype O:6 (strain 81116 / NCTC 11828) protein is Large ribosomal subunit protein bL9.